The following is a 482-amino-acid chain: Catalase (482 aa).

Residues His53 and Asn126 contribute to the active site. Tyr336 serves as a coordination point for heme.

It belongs to the catalase family. The cofactor is heme.

It localises to the periplasm. The catalysed reaction is 2 H2O2 = O2 + 2 H2O. Functionally, decomposes hydrogen peroxide into water and oxygen; serves to protect cells from the toxic effects of hydrogen peroxide. Could protect cells in nodules which have a high potential to produce hydrogen peroxide because of the strong reducing conditions required for nitrogen fixation and the action of several proteins. This Aliivibrio fischeri (strain ATCC 700601 / ES114) (Vibrio fischeri) protein is Catalase (katA).